We begin with the raw amino-acid sequence, 195 residues long: Interferon tau-5 (195 aa).

The first 23 residues, 1–23 (MAFVLSLLMALVLVSYGPGGSLG), serve as a signal peptide directing secretion. 2 cysteine pairs are disulfide-bonded: Cys24-Cys122 and Cys52-Cys162.

It belongs to the alpha/beta interferon family. IFN-alphaII subfamily. In terms of tissue distribution, constitutively and exclusively expressed in the mononuclear cells of the extraembryonic trophectoderm.

The protein localises to the secreted. Functionally, paracrine hormone primarily responsible for maternal recognition of pregnancy. Interacts with endometrial receptors, probably type I interferon receptors, and blocks estrogen receptor expression, preventing the estrogen-induced increase in oxytocin receptor expression in the endometrium. This results in the suppression of the pulsatile endometrial release of the luteolytic hormone prostaglandin F2-alpha, hindering the regression of the corpus luteum (luteolysis) and therefore a return to ovarian cyclicity. This, and a possible direct effect of IFN-tau on prostaglandin synthesis, leads in turn to continued ovarian progesterone secretion, which stimulates the secretion by the endometrium of the nutrients required for the growth of the conceptus. In summary, displays particularly high antiviral and antiproliferative potency concurrently with particular weak cytotoxicity, high antiluteolytic activity and immunomodulatory properties. In contrast with other IFNs, IFN-tau is not virally inducible. This chain is Interferon tau-5 (IFNT5), found in Ovis aries (Sheep).